A 247-amino-acid chain; its full sequence is MDAFSSFFDSQPGSRSWSYDSLKNFRQISPAVQNHLKRVYLTLCCALVASAFGAYLHVLWNIGGILTTIGCIGTMIWLLSCPPYEHQKRLSLLFVSAVLEGASVGPLIKVAIDVDPSILITAFVGTAIAFVCFSAAAMLARRREYLYLGGLLSSGLSMLMWLQFASSIFGGSASIFKFELYFGLLIFVGYMVVDTQEIIEKAHLGDMDYVKHSLTLFTDFVAVFVRILIIMLKNSADKEEKKKKRRN.

Met-1 carries the post-translational modification N-acetylmethionine. The next 6 helical transmembrane spans lie at 58–78 (VLWN…MIWL), 92–112 (LLFV…KVAI), 118–138 (ILIT…AAAM), 145–165 (YLYL…LQFA), 173–193 (ASIF…YMVV), and 212–232 (HSLT…IIML).

Belongs to the BI1 family. In terms of assembly, interacts (via C-terminus) with calmodulin, CYTB5-B and CYTB5-D. Interacts indirectly with FAH1 via CYTB5-D. Expressed in root tips, root vasculature, flower tissues, including stamens and sepals, and in the base of siliques. Not detected in mature leaves.

The protein resides in the endoplasmic reticulum membrane. In terms of biological role, suppressor of apoptosis. Modulator of endoplasmic reticulum stress-mediated programmed cell death. Involved in methyl jasmonate-induced leaf senescence through regulating cytoplasmic calcium level. This chain is Bax inhibitor 1 (BI-1), found in Arabidopsis thaliana (Mouse-ear cress).